The primary structure comprises 435 residues: Galactomannan galactosyltransferase 1 (435 aa).

The Cytoplasmic portion of the chain corresponds to Met1–Phe20. The helical; Signal-anchor for type II membrane protein transmembrane segment at Leu21–Ile41 threads the bilayer. Over Pro42 to Ala435 the chain is Lumenal. Residues Asn230 and Asn328 are each glycosylated (N-linked (GlcNAc...) asparagine). Residues Glu321–Lys354 adopt a coiled-coil conformation.

Belongs to the glycosyltransferase 34 family.

The protein resides in the golgi apparatus membrane. Its function is as follows. Galactomannan galactosyltransferase (GMGT) involved in galactomannan biosynthesis in seed endosperm. GMGT specificity is an important factor regulating the distribution and amount of alpha-1,6-galactose (Gal) substitution of the beta-1,4-linked mannan backbone. This is Galactomannan galactosyltransferase 1 (GMGT1) from Cyamopsis tetragonoloba (Guar).